A 2543-amino-acid chain; its full sequence is Polyketide synthase PksR (2543 aa).

A methyltransferase region spans residues 165 to 269 (LEIGAGTGGT…KAVLKKNGLL (105 aa)). One can recognise a Carrier 1 domain in the interval 376 to 452 (SLIEQTAQFV…ELVEYLVKGH (77 aa)). O-(pantetheine 4'-phosphoryl)serine is present on serine 413. The disordered stretch occupies residues 465–485 (TKPAKNEAPLQTERTDPNKPF). Residues 527-959 (TEDIAIIGVS…GAYANLIIEE (433 aa)) form the Ketosynthase family 3 (KS3) 1 domain. Catalysis depends on cysteine 700, which acts as the For beta-ketoacyl synthase 1 activity. The segment at 1114 to 1242 (HFDVSSINEK…GQCGIGSFEP (129 aa)) is N-terminal hotdog fold. Positions 1114 to 1397 (HFDVSSINEK…LKQLRISNQR (284 aa)) constitute a PKS/mFAS DH domain. The segment at 1255–1397 (TKLHHIDQMY…LKQLRISNQR (143 aa)) is C-terminal hotdog fold. One can recognise a Carrier 2 domain in the interval 1407 to 1485 (SNLKARIRSY…ELIDFFADKH (79 aa)). Serine 1445 carries the O-(pantetheine 4'-phosphoryl)serine modification. Positions 1528-1946 (ADGIAIIGMS…GVNAHVILEE (419 aa)) constitute a Ketosynthase family 3 (KS3) 2 domain. Residues cysteine 1680, histidine 1815, and histidine 1862 each act as for beta-ketoacyl synthase 2 activity in the active site. The Carrier 3 domain occupies 2134–2208 (RINNSSDHHI…DMMDLIAKKQ (75 aa)). Serine 2168 carries the O-(pantetheine 4'-phosphoryl)serine modification. Residues 2234–2514 (RPVFWFHGGV…EFCEKLYSNR (281 aa)) are thioesterase.

Pantetheine 4'-phosphate is required as a cofactor.

It is found in the cytoplasm. It functions in the pathway antibiotic biosynthesis; bacillaene biosynthesis. Involved in some intermediate steps for the synthesis of the antibiotic polyketide bacillaene which is involved in secondary metabolism. The sequence is that of Polyketide synthase PksR (pksR) from Bacillus subtilis (strain 168).